The chain runs to 517 residues: FERM domain-containing protein 5 (517 aa).

One can recognise an FERM domain in the interval 17 to 298 (YSCTVRLLDD…ENQAFYKLEK (282 aa)). The interaction with ROCK1 stretch occupies residues 308 to 353 (SNLFFKGSRFRYSGRVAKEVMESSAKIKREPPEIHRAGMVPSRSCP). A disordered region spans residues 344 to 367 (AGMVPSRSCPSITHGPRLSSVPRT). Ser-375 is modified (phosphoserine). 2 disordered regions span residues 385-408 (DSAH…VRSS) and 485-517 (GHGG…VPLD). Positions 388-398 (HSTPVRSSSHG) are enriched in polar residues. A compositionally biased stretch (low complexity) spans 498-517 (KGPQLQQQQWKGWGKSVPLD).

Interacts with CTNND1, ITGB5 (via cytoplasmic domain) and ROCK1.

The protein resides in the cell junction. Its subcellular location is the adherens junction. Its function is as follows. May be involved in regulation of cell migration. May regulate cell-matrix interactions via its interaction with ITGB5 and modifying ITGB5 cytoplasmic tail interactions such as with FERMT2 and TLN1. May regulate ROCK1 kinase activity possibly involved in regulation of actin stress fiber formation. The protein is FERM domain-containing protein 5 (Frmd5) of Mus musculus (Mouse).